A 132-amino-acid chain; its full sequence is MGKDTIADIITSIRNAQMAKKGTVRIASTNLTENVVKILLREGFIENVRKHRESNKDFLVLTLRHRRTRKGIYRTILKRISRPGLRIYSNYQGIPKILGGIGIVIVSTSRGIMTDREARLQGIGGEMLCYIC.

Belongs to the universal ribosomal protein uS8 family. In terms of assembly, part of the 30S ribosomal subunit.

It localises to the plastid. The protein resides in the chloroplast. In terms of biological role, one of the primary rRNA binding proteins, it binds directly to 16S rRNA central domain where it helps coordinate assembly of the platform of the 30S subunit. The chain is Small ribosomal subunit protein uS8c (rps8) from Acorus calamus (Sweet flag).